The chain runs to 282 residues: Protoheme IX farnesyltransferase (282 aa).

Transmembrane regions (helical) follow at residues 9–29 (LAKP…FLLA), 39–59 (LPLF…GCVF), 79–99 (LVTG…LLIL), 102–122 (LVLY…GFIV), 139–159 (VLGG…VVNI), 165–185 (LALF…IAML), 210–230 (IMLF…VLGS), 231–251 (ADLF…YKSI), and 261–281 (VFAK…CLTM).

The protein belongs to the UbiA prenyltransferase family. Protoheme IX farnesyltransferase subfamily.

The protein resides in the cell inner membrane. The catalysed reaction is heme b + (2E,6E)-farnesyl diphosphate + H2O = Fe(II)-heme o + diphosphate. The protein operates within porphyrin-containing compound metabolism; heme O biosynthesis; heme O from protoheme: step 1/1. In terms of biological role, converts heme B (protoheme IX) to heme O by substitution of the vinyl group on carbon 2 of heme B porphyrin ring with a hydroxyethyl farnesyl side group. This chain is Protoheme IX farnesyltransferase, found in Francisella tularensis subsp. novicida (strain U112).